The following is a 659-amino-acid chain: Cysteine-rich receptor-like protein kinase 5 (659 aa).

Residues 1–24 form the signal peptide; sequence MSAYTSLNFLFLLTFFIGSLRVSA. The Extracellular portion of the chain corresponds to 25–279; the sequence is QLQDPTYVGH…FPPGKGKNST (255 aa). Gnk2-homologous domains follow at residues 28 to 132 and 138 to 243; these read DPTY…DRNI and TTTT…VYPF. Asn-175 and Asn-277 each carry an N-linked (GlcNAc...) asparagine glycan. The helical transmembrane segment at 280–300 threads the bilayer; it reads VIIIAIVVPVAISVLICVAVF. The Cytoplasmic segment spans residues 301-659; it reads SFHASKRAKK…AASITILAPR (359 aa). The Protein kinase domain maps to 340–619; it reads FSMCNKLGQG…QMLTTSSIAL (280 aa). Residues 346–354 and Lys-368 contribute to the ATP site; that span reads LGQGGFGQV. Tyr-413 bears the Phosphotyrosine mark. Asp-465 acts as the Proton acceptor in catalysis. Thr-505 bears the Phosphothreonine mark. Phosphotyrosine is present on Tyr-513.

The protein belongs to the protein kinase superfamily. Ser/Thr protein kinase family. CRK subfamily. Interacts with CRKIP1 (KAPP), CRKIP2 and CRKIP3, three kinase-associated type 2C proteins.

It localises to the membrane. The enzyme catalyses L-seryl-[protein] + ATP = O-phospho-L-seryl-[protein] + ADP + H(+). It carries out the reaction L-threonyl-[protein] + ATP = O-phospho-L-threonyl-[protein] + ADP + H(+). Its function is as follows. Involved in multiple distinct defense responses. May function as a disease resistance (R) protein. In Arabidopsis thaliana (Mouse-ear cress), this protein is Cysteine-rich receptor-like protein kinase 5 (CRK5).